The following is a 485-amino-acid chain: Pentatricopeptide repeat-containing protein At1g62720 (485 aa).

PPR repeat units lie at residues 68–102 (SIVD…GIGH), 103–137 (DLYS…GYEP), 138–172 (DVVT…GFRP), 173–207 (DVVI…GVRA), 208–242 (DAVT…DIVP), 243–277 (NVIT…CVDP), 278–312 (DVFT…GCLP), 313–347 (DVVT…GLVG), 348–378 (DTIT…MDSR), 380–414 (NIRT…EIEL), 415–449 (DITT…GLKP), and 450–484 (DVVS…GLLP).

Belongs to the PPR family. P subfamily.

The sequence is that of Pentatricopeptide repeat-containing protein At1g62720 from Arabidopsis thaliana (Mouse-ear cress).